A 178-amino-acid polypeptide reads, in one-letter code: Probable DNA-directed RNA polymerase subunit delta (178 aa).

The region spanning 14–81 (KSFIDMAYTL…GENLWGLRDW (68 aa)) is the HTH HARE-type domain. Positions 114-178 (LGDDDADEDD…AFEDAEDFND (65 aa)) are disordered. Residues 116–178 (DDDADEDDDI…AFEDAEDFND (63 aa)) are compositionally biased toward acidic residues.

The protein belongs to the RpoE family. In terms of assembly, RNAP is composed of a core of 2 alpha, a beta and a beta' subunits. The core is associated with a delta subunit and one of several sigma factors.

Its function is as follows. Participates in both the initiation and recycling phases of transcription. In the presence of the delta subunit, RNAP displays an increased specificity of transcription, a decreased affinity for nucleic acids, and an increased efficiency of RNA synthesis because of enhanced recycling. The chain is Probable DNA-directed RNA polymerase subunit delta from Staphylococcus epidermidis (strain ATCC 35984 / DSM 28319 / BCRC 17069 / CCUG 31568 / BM 3577 / RP62A).